Consider the following 411-residue polypeptide: Serine hydroxymethyltransferase (411 aa).

Residues leucine 117 and 121-123 (GHL) contribute to the (6S)-5,6,7,8-tetrahydrofolate site. N6-(pyridoxal phosphate)lysine is present on lysine 226. (6S)-5,6,7,8-tetrahydrofolate contacts are provided by residues glutamate 241 and 349 to 351 (SPF).

This sequence belongs to the SHMT family. Homodimer. Pyridoxal 5'-phosphate is required as a cofactor.

Its subcellular location is the cytoplasm. It catalyses the reaction (6R)-5,10-methylene-5,6,7,8-tetrahydrofolate + glycine + H2O = (6S)-5,6,7,8-tetrahydrofolate + L-serine. It functions in the pathway one-carbon metabolism; tetrahydrofolate interconversion. Its pathway is amino-acid biosynthesis; glycine biosynthesis; glycine from L-serine: step 1/1. Catalyzes the reversible interconversion of serine and glycine with tetrahydrofolate (THF) serving as the one-carbon carrier. This reaction serves as the major source of one-carbon groups required for the biosynthesis of purines, thymidylate, methionine, and other important biomolecules. Also exhibits THF-independent aldolase activity toward beta-hydroxyamino acids, producing glycine and aldehydes, via a retro-aldol mechanism. This chain is Serine hydroxymethyltransferase, found in Macrococcus caseolyticus (strain JCSC5402) (Macrococcoides caseolyticum).